Consider the following 293-residue polypeptide: Energy-coupling factor transporter ATP-binding protein EcfA2 (293 aa).

Positions 3–246 constitute an ABC transporter domain; the sequence is ITFQKVEHRY…ADELEKIGVD (244 aa). 40-47 serves as a coordination point for ATP; the sequence is GHTGSGKS.

The protein belongs to the ABC transporter superfamily. Energy-coupling factor EcfA family. As to quaternary structure, forms a stable energy-coupling factor (ECF) transporter complex composed of 2 membrane-embedded substrate-binding proteins (S component), 2 ATP-binding proteins (A component) and 2 transmembrane proteins (T component).

Its subcellular location is the cell membrane. Functionally, ATP-binding (A) component of a common energy-coupling factor (ECF) ABC-transporter complex. Unlike classic ABC transporters this ECF transporter provides the energy necessary to transport a number of different substrates. The sequence is that of Energy-coupling factor transporter ATP-binding protein EcfA2 from Bacillus cereus (strain ATCC 14579 / DSM 31 / CCUG 7414 / JCM 2152 / NBRC 15305 / NCIMB 9373 / NCTC 2599 / NRRL B-3711).